A 334-amino-acid polypeptide reads, in one-letter code: Adenosine deaminase (334 aa).

Zn(2+)-binding residues include histidine 12 and histidine 14. Substrate contacts are provided by histidine 14, aspartate 16, and glycine 170. Zn(2+) is bound at residue histidine 197. The Proton donor role is filled by glutamate 200. Zn(2+) is bound at residue aspartate 278. A substrate-binding site is contributed by aspartate 279.

It belongs to the metallo-dependent hydrolases superfamily. Adenosine and AMP deaminases family. Adenosine deaminase subfamily. The cofactor is Zn(2+).

It catalyses the reaction adenosine + H2O + H(+) = inosine + NH4(+). It carries out the reaction 2'-deoxyadenosine + H2O + H(+) = 2'-deoxyinosine + NH4(+). Catalyzes the hydrolytic deamination of adenosine and 2-deoxyadenosine. The chain is Adenosine deaminase from Vibrio parahaemolyticus serotype O3:K6 (strain RIMD 2210633).